Reading from the N-terminus, the 464-residue chain is MRNWVRQIHMVGIGGSGMRGIAEVLLNLGYAVSGSDLRPGNSTLRLTDLGARIFSGHEAANVRGADVVVISSAIPESNPEVQAARELRIPVIRRAEMLAELMRFKQGIAIAGTHGKTTTTSLVASILGAGGLDPTFVIGGRLKSAGTHAALGSGEYLVAEADESDASFLYLSPVMAVVTNIDADHMETYGGSLDNLRGAFLQFLQRLPFYGLAVLCTDEAVVAGLIPELRTPVLRYGFGADADLQARDVTVQGIGSRFAVWRRVDSDYVHWLDVELGIPGRHNVLNALAAIGIASKVGIPESTIATALADFRGVGRRFELVGTFDGITVVDDYGHHPREIAATIAAARSVWPERPLVVAFQPHRYSRTQALFADFVSSLAAADRVILTDIYSAGEKALPGVTGRALAEAMAAQGMSVRFLPDLLTAPQQIRAELPAGAVLLTLGAGSIASLAAQWPQVFGEDPS.

Position 112–118 (112–118) interacts with ATP; that stretch reads GTHGKTT.

It belongs to the MurCDEF family.

The protein resides in the cytoplasm. The catalysed reaction is UDP-N-acetyl-alpha-D-muramate + L-alanine + ATP = UDP-N-acetyl-alpha-D-muramoyl-L-alanine + ADP + phosphate + H(+). Its pathway is cell wall biogenesis; peptidoglycan biosynthesis. Cell wall formation. The protein is UDP-N-acetylmuramate--L-alanine ligase of Acidithiobacillus ferrooxidans (strain ATCC 23270 / DSM 14882 / CIP 104768 / NCIMB 8455) (Ferrobacillus ferrooxidans (strain ATCC 23270)).